We begin with the raw amino-acid sequence, 296 residues long: UDP-N-acetylenolpyruvoylglucosamine reductase (296 aa).

Residues 26 to 191 (RIGGPANYFK…LSATFRLSRN (166 aa)) enclose the FAD-binding PCMH-type domain. Residue R170 is part of the active site. The active-site Proton donor is the C218. E287 is an active-site residue.

Belongs to the MurB family. It depends on FAD as a cofactor.

It localises to the cytoplasm. It carries out the reaction UDP-N-acetyl-alpha-D-muramate + NADP(+) = UDP-N-acetyl-3-O-(1-carboxyvinyl)-alpha-D-glucosamine + NADPH + H(+). It participates in cell wall biogenesis; peptidoglycan biosynthesis. Functionally, cell wall formation. The chain is UDP-N-acetylenolpyruvoylglucosamine reductase from Chlamydia abortus (strain DSM 27085 / S26/3) (Chlamydophila abortus).